A 324-amino-acid polypeptide reads, in one-letter code: Beta-ketoacyl-[acyl-carrier-protein] synthase III (324 aa).

Catalysis depends on residues Cys-114 and His-246. Residues 247 to 251 (QANLR) are ACP-binding. Residue Asn-276 is part of the active site.

This sequence belongs to the thiolase-like superfamily. FabH family. As to quaternary structure, homodimer.

Its subcellular location is the cytoplasm. It carries out the reaction malonyl-[ACP] + acetyl-CoA + H(+) = 3-oxobutanoyl-[ACP] + CO2 + CoA. Its pathway is lipid metabolism; fatty acid biosynthesis. In terms of biological role, catalyzes the condensation reaction of fatty acid synthesis by the addition to an acyl acceptor of two carbons from malonyl-ACP. Catalyzes the first condensation reaction which initiates fatty acid synthesis and may therefore play a role in governing the total rate of fatty acid production. Possesses both acetoacetyl-ACP synthase and acetyl transacylase activities. Its substrate specificity determines the biosynthesis of branched-chain and/or straight-chain of fatty acids. This chain is Beta-ketoacyl-[acyl-carrier-protein] synthase III, found in Campylobacter jejuni subsp. doylei (strain ATCC BAA-1458 / RM4099 / 269.97).